We begin with the raw amino-acid sequence, 481 residues long: Fibrinogen beta chain (481 aa).

A signal peptide spans 1 to 19 (MRHLWLLLLLCVFSVQTQA). Residues 22–81 (DDYDEPTDSLDARGHRPVDRRKEEPPSLRPAPPPISGGGYRARPAKATANQKKVERRPPD) are disordered. Residues 31–47 (LDARGHRPVDRRKEEPP) show a composition bias toward basic and acidic residues. Residues 35 to 37 (GHR) are beta-chain polymerization, binding distal domain of another fibrin. A coiled-coil region spans residues 149 to 213 (QAQVKENENV…SDISAQMEYC (65 aa)). Cystine bridges form between Cys221-Cys306 and Cys231-Cys260. The region spanning 222–478 (NIPVVSGKEC…RMSMKIRPFF (257 aa)) is the Fibrinogen C-terminal domain. Asn384 carries N-linked (GlcNAc...) asparagine glycosylation. Cys414 and Cys427 are disulfide-bonded.

In terms of assembly, heterohexamer; disulfide linked. Contains 2 sets of 3 non-identical chains (alpha, beta and gamma). The 2 heterotrimers are in head to head conformation with the N-termini in a small central domain. Post-translationally, conversion of fibrinogen to fibrin is triggered by thrombin, which cleaves fibrinopeptides A and B from alpha and beta chains, and thus exposes the N-terminal polymerization sites responsible for the formation of the soft clot.

It is found in the secreted. Cleaved by the protease thrombin to yield monomers which, together with fibrinogen alpha (FGA) and fibrinogen gamma (FGG), polymerize to form an insoluble fibrin matrix. Fibrin has a major function in hemostasis as one of the primary components of blood clots. In addition, functions during the early stages of wound repair to stabilize the lesion and guide cell migration during re-epithelialization. Was originally thought to be essential for platelet aggregation, based on in vitro studies using anticoagulated blood. However, subsequent studies have shown that it is not absolutely required for thrombus formation in vivo. Enhances expression of SELP in activated platelets via an ITGB3-dependent pathway. Maternal fibrinogen is essential for successful pregnancy. Fibrin deposition is also associated with infection, where it protects against IFNG-mediated hemorrhage. May also facilitate the immune response via both innate and T-cell mediated pathways. This Mus musculus (Mouse) protein is Fibrinogen beta chain (Fgb).